The following is a 1300-amino-acid chain: DNA-directed RNA polymerase subunit beta (1300 aa).

This sequence belongs to the RNA polymerase beta chain family. As to quaternary structure, the RNAP catalytic core consists of 2 alpha, 1 beta, 1 beta' and 1 omega subunit. When a sigma factor is associated with the core the holoenzyme is formed, which can initiate transcription.

It catalyses the reaction RNA(n) + a ribonucleoside 5'-triphosphate = RNA(n+1) + diphosphate. Its function is as follows. DNA-dependent RNA polymerase catalyzes the transcription of DNA into RNA using the four ribonucleoside triphosphates as substrates. The chain is DNA-directed RNA polymerase subunit beta from Chlorobium chlorochromatii (strain CaD3).